Here is a 360-residue protein sequence, read N- to C-terminus: DNA replication and repair protein RecF (360 aa).

30 to 37 (GQNGSGKT) is a binding site for ATP.

The protein belongs to the RecF family.

The protein resides in the cytoplasm. Functionally, the RecF protein is involved in DNA metabolism; it is required for DNA replication and normal SOS inducibility. RecF binds preferentially to single-stranded, linear DNA. It also seems to bind ATP. This is DNA replication and repair protein RecF from Shewanella sp. (strain W3-18-1).